A 159-amino-acid chain; its full sequence is Flagellar assembly factor FliW (159 aa).

The protein belongs to the FliW family. Interacts with translational regulator CsrA and flagellin(s).

The protein localises to the cytoplasm. Acts as an anti-CsrA protein, binds CsrA and prevents it from repressing translation of its target genes, one of which is flagellin. Binds to flagellin and participates in the assembly of the flagellum. The polypeptide is Flagellar assembly factor FliW (Geobacter sulfurreducens (strain ATCC 51573 / DSM 12127 / PCA)).